Reading from the N-terminus, the 685-residue chain is Putative protein FAR1-RELATED SEQUENCE 10 (685 aa).

In terms of domain architecture, FAR1 spans 69-161 (EYYSTFARKS…SNVHNHELLE (93 aa)). Positions 292–388 (VVVFDTSYRS…FMSHIVSKLA (97 aa)) constitute an MULE domain. An SWIM-type zinc finger spans residues 565–603 (GECCVIWNPENEEIQCSCKEFEHSGILCRHTLRVLTVKN).

Belongs to the FHY3/FAR1 family.

This is Putative protein FAR1-RELATED SEQUENCE 10 (FRS10) from Arabidopsis thaliana (Mouse-ear cress).